The primary structure comprises 197 residues: Probable thymidylate kinase (197 aa).

7-14 (GLDGSGKT) is an ATP binding site.

The protein belongs to the thymidylate kinase family.

It catalyses the reaction dTMP + ATP = dTDP + ADP. This is Probable thymidylate kinase from Halorubrum lacusprofundi (strain ATCC 49239 / DSM 5036 / JCM 8891 / ACAM 34).